Consider the following 518-residue polypeptide: Bifunctional methyltransferase (518 aa).

Residues 1-300 (MQYSIKQILN…SHNRVIEISP (300 aa)) are hemK. The segment at 1-302 (MQYSIKQILN…NRVIEISPIN (302 aa)) is RF MTase. Residues 140–144 (GTGSG), aspartate 163, tryptophan 192, asparagine 207, glutamate 347, glutamate 372, asparagine 399, and aspartate 421 contribute to the S-adenosyl-L-methionine site. Residue 207–210 (NPPY) coordinates substrate. Residues 301–518 (INLNRSYARR…MILQHALTGH (218 aa)) are tRNA (guanine-N(7)-)-methyltransferase. The interval 305–518 (RSYARRIGKS…MILQHALTGH (214 aa)) is tRNA MTase. Aspartate 421 is a catalytic residue. Lysine 425 and aspartate 457 together coordinate substrate.

It in the C-terminal section; belongs to the class I-like SAM-binding methyltransferase superfamily. TrmB family. In the N-terminal section; belongs to the protein N5-glutamine methyltransferase family. PrmC subfamily.

It carries out the reaction L-glutaminyl-[peptide chain release factor] + S-adenosyl-L-methionine = N(5)-methyl-L-glutaminyl-[peptide chain release factor] + S-adenosyl-L-homocysteine + H(+). The catalysed reaction is guanosine(46) in tRNA + S-adenosyl-L-methionine = N(7)-methylguanosine(46) in tRNA + S-adenosyl-L-homocysteine. Functionally, methylates the class 1 translation termination release factors RF1/PrfA and RF2/PrfB on the glutamine residue of the universally conserved GGQ motif. Catalyzes the formation of N(7)-methylguanine at position 46 (m7G46) in tRNA. This chain is Bifunctional methyltransferase (prmC/trmB), found in Rickettsia typhi (strain ATCC VR-144 / Wilmington).